A 297-amino-acid chain; its full sequence is MSAWAAASLSRAAARCLLARGPGVRAAPPRDPRPSHPEPRGCGAAPGRTLHFTAAVPAGHNKWSKVRHIKGPKDVERSRIFSKLCLNIRLAVKEGGPNPEHNSNLANILEVCRSKHMPKSTIETALKMEKSKDTYLLYEGRGPGGSSLLIEALSNSSHKCQADIRHILNKNGGVMAVGARHSFDKKGVIVVEVEDREKKAVNLERALEMAIEAGAEDVKETEDEEERNVFKFICDASSLHQVRKKLDSLGLCSVSCALEFIPNSKVQLAEPDLEQAAHLIQALSNHEDVIHVYDNIE.

The disordered stretch occupies residues 20-45; the sequence is RGPGVRAAPPRDPRPSHPEPRGCGAA. Positions 28 to 39 are enriched in basic and acidic residues; it reads PPRDPRPSHPEP. The stretch at 191–227 forms a coiled coil; that stretch reads VEVEDREKKAVNLERALEMAIEAGAEDVKETEDEEER.

This sequence belongs to the TACO1 family.

It localises to the mitochondrion. In terms of biological role, acts as a translational activator of mitochondrially-encoded cytochrome c oxidase 1. The protein is Translational activator of cytochrome c oxidase 1 (TACO1) of Homo sapiens (Human).